The primary structure comprises 139 residues: D-ribose pyranase (139 aa).

The active-site Proton donor is H20. Substrate contacts are provided by residues D28, H106, and 128–130 (YAN).

The protein belongs to the RbsD / FucU family. RbsD subfamily. Homodecamer.

The protein localises to the cytoplasm. It carries out the reaction beta-D-ribopyranose = beta-D-ribofuranose. It functions in the pathway carbohydrate metabolism; D-ribose degradation; D-ribose 5-phosphate from beta-D-ribopyranose: step 1/2. In terms of biological role, catalyzes the interconversion of beta-pyran and beta-furan forms of D-ribose. The sequence is that of D-ribose pyranase from Haemophilus influenzae (strain 86-028NP).